The primary structure comprises 369 residues: H-2 class I histocompatibility antigen, K-K alpha chain (369 aa).

The signal sequence occupies residues 1–21; sequence MAPCMLLLLLAAALAPTQTRA. Positions 22-111 are alpha-1; the sequence is GPHSLRYFHT…ALRYYNQSAG (90 aa). Topologically, residues 22 to 305 are extracellular; that stretch reads GPHSLRYFHT…EPPPSTVSNT (284 aa). N-linked (GlcNAc...) asparagine glycosylation is present at Asn107. The interval 112–203 is alpha-2; it reads GSHTFQRMYG…QLGNATLPRT (92 aa). An intrachain disulfide couples Cys122 to Cys185. N-linked (GlcNAc...) asparagine glycosylation is present at Asn197. The interval 204–295 is alpha-3; sequence DSPKAHVTRH…GLPEPLTLRW (92 aa). The 89-residue stretch at 206–294 folds into the Ig-like C1-type domain; it reads PKAHVTRHSR…QGLPEPLTLR (89 aa). A disulfide bridge connects residues Cys224 and Cys280. Positions 296-305 are connecting peptide; it reads EPPPSTVSNT. A helical transmembrane segment spans residues 306–328; that stretch reads VIIAVLVVLGAAIVTGAVVAFVM. Residues 329-369 are Cytoplasmic-facing; the sequence is KMRRRNTGGKGGDYALAPGSQTSDLSLPDCKVMVHDPHSLA. 2 positions are modified to phosphoserine: Ser351 and Ser354.

This sequence belongs to the MHC class I family. As to quaternary structure, heterodimer of an alpha chain and a beta chain (beta-2-microglobulin).

It localises to the membrane. Involved in the presentation of foreign antigens to the immune system. The sequence is that of H-2 class I histocompatibility antigen, K-K alpha chain (H2-K1) from Mus musculus (Mouse).